A 330-amino-acid chain; its full sequence is Aspartate--ammonia ligase (330 aa).

Belongs to the class-II aminoacyl-tRNA synthetase family. AsnA subfamily.

It is found in the cytoplasm. It catalyses the reaction L-aspartate + NH4(+) + ATP = L-asparagine + AMP + diphosphate + H(+). The protein operates within amino-acid biosynthesis; L-asparagine biosynthesis; L-asparagine from L-aspartate (ammonia route): step 1/1. This Shigella boydii serotype 18 (strain CDC 3083-94 / BS512) protein is Aspartate--ammonia ligase.